The following is a 416-amino-acid chain: Pre-mRNA-splicing factor slu-7 (416 aa).

Residues 1 to 34 (MPPPPPNRREQATAAPSSTDKSETGAGAARKEDN) are disordered. A CCHC-type zinc finger spans residues 95–112 (GACENCGAMGHKKKDCLE). Composition is skewed to basic and acidic residues over residues 168 to 179 (RRALQGDQKTPD) and 188 to 213 (DDKS…QSMR). Residues 168–213 (RRALQGDQKTPDGEGADGPEDDKSGFKYDEESDMGRDRATTKQSMR) form a disordered region.

This sequence belongs to the SLU7 family. As to quaternary structure, associated with the spliceosome.

The protein resides in the nucleus. Involved in pre-mRNA splicing. This is Pre-mRNA-splicing factor slu-7 (slu-7) from Neurospora crassa (strain ATCC 24698 / 74-OR23-1A / CBS 708.71 / DSM 1257 / FGSC 987).